A 218-amino-acid chain; its full sequence is MDKSESTSAGRNRRRRLRRGSRSAPSSADANFRVLSQQLSRLNKTLSAGRPTINHPTFVGSERCKPGYTFTSITLKPPKIDRGSYYGKRLLLPDSVTEYDKKLVSRIQIRVNPLPKFDSTVWVTVRKVPASSDLSVAAISAMFADGASPVLVYQYAASGVQANNKLLYDLSAMRADIGDMRKYAVLVYSKDDTLETDELVLHVDVEHQRIPTSGVLPV.

Met1 carries the post-translational modification N-acetylmethionine; by host. Positions 1–10 (MDKSESTSAG) are enriched in low complexity. The disordered stretch occupies residues 1–29 (MDKSESTSAGRNRRRRLRRGSRSAPSSAD). Positions 11 to 21 (RNRRRRLRRGS) are enriched in basic residues.

It belongs to the cucumovirus capsid protein family.

Its subcellular location is the virion. Its function is as follows. Capsid protein. Probably binds RNA and plays a role in packaging. The chain is Capsid protein from Cucumis sativus (Cucumber).